Consider the following 256-residue polypeptide: Ribonuclease 3 (256 aa).

Residues 3 to 125 (LDALQQRLGY…IVGAVFLDAG (123 aa)) form the RNase III domain. Glutamate 38 is a Mg(2+) binding site. Aspartate 42 is a catalytic residue. Positions 111 and 114 each coordinate Mg(2+). Glutamate 114 is an active-site residue. The 71-residue stretch at 152 to 222 (DAKTLLQEYL…AKLALDEVQK (71 aa)) folds into the DRBM domain. Residues 230 to 256 (RSRAERTGKTRKQPVPQDPQLSLRLKE) are disordered.

It belongs to the ribonuclease III family. In terms of assembly, homodimer. It depends on Mg(2+) as a cofactor.

It localises to the cytoplasm. It carries out the reaction Endonucleolytic cleavage to 5'-phosphomonoester.. In terms of biological role, digests double-stranded RNA. Involved in the processing of primary rRNA transcript to yield the immediate precursors to the large and small rRNAs (23S and 16S). Processes some mRNAs, and tRNAs when they are encoded in the rRNA operon. Processes pre-crRNA and tracrRNA of type II CRISPR loci if present in the organism. The chain is Ribonuclease 3 from Cupriavidus necator (strain ATCC 17699 / DSM 428 / KCTC 22496 / NCIMB 10442 / H16 / Stanier 337) (Ralstonia eutropha).